The following is a 208-amino-acid chain: Putative archaetidylserine decarboxylase proenzyme (208 aa).

Residue Ser-172 is the Schiff-base intermediate with substrate; via pyruvic acid of the active site. The residue at position 172 (Ser-172) is a Pyruvic acid (Ser); by autocatalysis.

Belongs to the phosphatidylserine decarboxylase family. PSD-A subfamily. In terms of assembly, heterodimer of a large membrane-associated beta subunit and a small pyruvoyl-containing alpha subunit. Pyruvate is required as a cofactor. Post-translationally, is synthesized initially as an inactive proenzyme. Formation of the active enzyme involves a self-maturation process in which the active site pyruvoyl group is generated from an internal serine residue via an autocatalytic post-translational modification. Two non-identical subunits are generated from the proenzyme in this reaction, and the pyruvate is formed at the N-terminus of the alpha chain, which is derived from the carboxyl end of the proenzyme. The post-translation cleavage follows an unusual pathway, termed non-hydrolytic serinolysis, in which the side chain hydroxyl group of the serine supplies its oxygen atom to form the C-terminus of the beta chain, while the remainder of the serine residue undergoes an oxidative deamination to produce ammonia and the pyruvoyl prosthetic group on the alpha chain.

It is found in the cell membrane. It catalyses the reaction archaetidylserine + H(+) = archaetidylethanolamine + CO2. Functionally, catalyzes the formation of archaetidylethanolamine (PtdEtn) from archaetidylserine (PtdSer). The protein is Putative archaetidylserine decarboxylase proenzyme of Methanosarcina mazei (strain ATCC BAA-159 / DSM 3647 / Goe1 / Go1 / JCM 11833 / OCM 88) (Methanosarcina frisia).